Here is a 252-residue protein sequence, read N- to C-terminus: Trans-aconitate 2-methyltransferase (252 aa).

This sequence belongs to the methyltransferase superfamily. Tam family.

The protein resides in the cytoplasm. The enzyme catalyses trans-aconitate + S-adenosyl-L-methionine = (E)-3-(methoxycarbonyl)pent-2-enedioate + S-adenosyl-L-homocysteine. Functionally, catalyzes the S-adenosylmethionine monomethyl esterification of trans-aconitate. The sequence is that of Trans-aconitate 2-methyltransferase from Enterobacter sp. (strain 638).